The following is a 225-amino-acid chain: uncharacterized protein (225 aa).

Residues Thr2–Leu22 traverse the membrane as a helical segment. Asn73 is a glycosylation site (N-linked (GlcNAc...) asparagine; by host). Residues Asp114–Leu146 adopt a coiled-coil conformation. The N-linked (GlcNAc...) asparagine; by host glycan is linked to Asn222.

The protein localises to the membrane. This is an uncharacterized protein from Acanthamoeba polyphaga (Amoeba).